The sequence spans 695 residues: Follicle-stimulating hormone receptor (695 aa).

The signal sequence occupies residues 1–17; that stretch reads MSLLLVSLLAFLTLGSG. 2 disulfides stabilise this stretch: Cys18–Cys25 and Cys23–Cys32. The region spanning 18–46 is the LRRNT domain; the sequence is CHHRICHCSNGVFLCQESKVTEIPPDLPR. Topologically, residues 18–366 are extracellular; that stretch reads CHHRICHCSN…EDIMGHDILR (349 aa). 9 LRR repeats span residues 49–72, 73–97, 98–118, 119–143, 144–169, 170–192, 193–216, 217–240, and 241–259; these read VELR…FGDL, EKIE…LPKL, HEIR…AFQN, LPNL…KIQS, LQKV…VGLS, FESM…AFNG, TQLD…VFQG, ASGP…GLEN, and LKKL…PSLE. 2 N-linked (GlcNAc...) asparagine glycosylation sites follow: Asn191 and Asn199. Intrachain disulfides connect Cys275/Cys346, Cys276/Cys292, Cys276/Cys356, and Cys292/Cys338. The N-linked (GlcNAc...) asparagine glycan is linked to Asn293. Tyr335 carries the post-translational modification Sulfotyrosine. Residues 367–387 traverse the membrane as a helical segment; sequence VLIWFISILAITGNIIVLVIL. The Cytoplasmic segment spans residues 388-398; sequence ITSQYKLTVPR. A helical membrane pass occupies residues 399–421; that stretch reads FLMCNLAFADLCIGIYLLLIASV. The Extracellular portion of the chain corresponds to 422–443; it reads DIHTKTQYHNYAIDWQTGAGCD. Cys442 and Cys517 are disulfide-bonded. Residues 444 to 465 traverse the membrane as a helical segment; that stretch reads AAGFFTVFASELSVYTLTAITL. The Cytoplasmic segment spans residues 466–485; sequence ERWHTITHAMQLQCKVQLRH. A helical transmembrane segment spans residues 486–508; the sequence is AASIMLVGWIFAFTVALFPIFGI. The Extracellular segment spans residues 509-528; sequence SSYMKVSICLPMDIDSPLSQ. The helical transmembrane segment at 529 to 550 threads the bilayer; it reads LYVVSLLVLNVLAFVVICGCYT. Residues 551 to 573 are Cytoplasmic-facing; that stretch reads HIYLTVRNPNIMSSSSDTKIAKR. The chain crosses the membrane as a helical span at residues 574–597; that stretch reads MAMLIFTDFLCMAPISFFAISASL. Residues 598-608 lie on the Extracellular side of the membrane; it reads KVPLITVSKSK. Residues 609 to 630 form a helical membrane-spanning segment; that stretch reads ILLVLFYPINSCANPFLYAIFT. Topologically, residues 631 to 695 are cytoplasmic; that stretch reads KNFRRDVFIL…LIPLSRLAQN (65 aa).

Belongs to the G-protein coupled receptor 1 family. FSH/LSH/TSH subfamily. Homotrimer. Functions as a homotrimer binding the FSH hormone heterodimer composed of CGA and FSHB. Interacts with ARRB2. Interacts with APPL2; interaction is independent of follicle stimulating hormone stimulation. N-glycosylated; indirectly required for FSH-binding, possibly via a conformational change that allows high affinity binding of hormone. Post-translationally, sulfated.

The protein localises to the cell membrane. G protein-coupled receptor for follitropin, the follicle-stimulating hormone. Through cAMP production activates the downstream PI3K-AKT and ERK1/ERK2 signaling pathways. This chain is Follicle-stimulating hormone receptor (FSHR), found in Sus scrofa (Pig).